The sequence spans 422 residues: Glycine amidinotransferase, mitochondrial (422 aa).

The N-terminal 37 residues, Met-1–Gln-37, are a transit peptide targeting the mitochondrion. Active-site residues include Asp-253 and His-302. Residue Cys-406 is the Amidino-cysteine intermediate of the active site. At Thr-416 the chain carries Phosphothreonine.

The protein belongs to the amidinotransferase family. As to quaternary structure, homodimer.

It is found in the mitochondrion inner membrane. The enzyme catalyses L-arginine + glycine = guanidinoacetate + L-ornithine. The protein operates within amine and polyamine biosynthesis; creatine biosynthesis; creatine from L-arginine and glycine: step 1/2. Functionally, catalyzes the biosynthesis of guanidinoacetate, the immediate precursor of creatine. Creatine plays a vital role in energy metabolism in muscle tissues. May play a role in embryonic and central nervous system development. This chain is Glycine amidinotransferase, mitochondrial, found in Gallus gallus (Chicken).